Consider the following 724-residue polypeptide: Phosphoribosylformylglycinamidine synthase subunit PurL (724 aa).

The active site involves H34. ATP contacts are provided by Y37 and K75. E77 contacts Mg(2+). Substrate contacts are provided by residues 78–81 (SHNH) and R100. The Proton acceptor role is filled by H79. D101 lines the Mg(2+) pocket. Q221 is a substrate binding site. Mg(2+) is bound at residue D249. Position 292–294 (292–294 (ESQ)) interacts with substrate. Residues D478 and G515 each coordinate ATP. Residue S518 participates in substrate binding.

The protein belongs to the FGAMS family. In terms of assembly, monomer. Part of the FGAM synthase complex composed of 1 PurL, 1 PurQ and 2 PurS subunits.

It localises to the cytoplasm. The catalysed reaction is N(2)-formyl-N(1)-(5-phospho-beta-D-ribosyl)glycinamide + L-glutamine + ATP + H2O = 2-formamido-N(1)-(5-O-phospho-beta-D-ribosyl)acetamidine + L-glutamate + ADP + phosphate + H(+). It participates in purine metabolism; IMP biosynthesis via de novo pathway; 5-amino-1-(5-phospho-D-ribosyl)imidazole from N(2)-formyl-N(1)-(5-phospho-D-ribosyl)glycinamide: step 1/2. Its function is as follows. Part of the phosphoribosylformylglycinamidine synthase complex involved in the purines biosynthetic pathway. Catalyzes the ATP-dependent conversion of formylglycinamide ribonucleotide (FGAR) and glutamine to yield formylglycinamidine ribonucleotide (FGAM) and glutamate. The FGAM synthase complex is composed of three subunits. PurQ produces an ammonia molecule by converting glutamine to glutamate. PurL transfers the ammonia molecule to FGAR to form FGAM in an ATP-dependent manner. PurS interacts with PurQ and PurL and is thought to assist in the transfer of the ammonia molecule from PurQ to PurL. This Caldivirga maquilingensis (strain ATCC 700844 / DSM 13496 / JCM 10307 / IC-167) protein is Phosphoribosylformylglycinamidine synthase subunit PurL.